Consider the following 915-residue polypeptide: Protein MEI2-like 1 (915 aa).

Residues 1-90 (MPSDIMEQRG…NTTNGSQWES (90 aa)) are disordered. The span at 16–25 (HFHEDIHITS) shows a compositional bias: basic and acidic residues. Residues 50–65 (MPKSSWTSESYQLKPQ) show a composition bias toward polar residues. Positions 66–77 (SSFSGSHPSGSP) are enriched in low complexity. Ser-76 carries the post-translational modification Phosphoserine. A compositionally biased stretch (polar residues) spans 78 to 89 (NARNTTNGSQWE). RRM domains lie at 217-290 (RTLL…YSIS) and 302-375 (GALL…PTYP). Disordered stretches follow at residues 690–723 (PGRS…SSSN) and 854–915 (LFHT…LKEN). A compositionally biased stretch (basic and acidic residues) spans 705-723 (PNERYRNLSHRRSESSSSN). A compositionally biased stretch (polar residues) spans 882 to 898 (RSSSIDNYNSFSISSVS).

In terms of tissue distribution, expressed in roots, shoots, leaves, flowers and siliques.

Its function is as follows. Probable RNA-binding transcriptional activator that plays a role in meiosis and vegetative growth. May be a downstream effector of TOR signaling pathway and recruited by RAPTOR1 for TOR substrate. The sequence is that of Protein MEI2-like 1 (ML1) from Arabidopsis thaliana (Mouse-ear cress).